The chain runs to 316 residues: Glutathione synthetase (316 aa).

Residues 125–310 (KLFTAWFSDL…ITGMLMDAIE (186 aa)) enclose the ATP-grasp domain. 151–207 (WEKHSDIILKPLDGMGGASIFRVKEGDPNLGVIAETLTEHGTCYCMAQNYLPAIKDG) provides a ligand contact to ATP. Residues E281 and N283 each coordinate Mg(2+).

Belongs to the prokaryotic GSH synthase family. It depends on Mg(2+) as a cofactor. Mn(2+) is required as a cofactor.

It carries out the reaction gamma-L-glutamyl-L-cysteine + glycine + ATP = glutathione + ADP + phosphate + H(+). Its pathway is sulfur metabolism; glutathione biosynthesis; glutathione from L-cysteine and L-glutamate: step 2/2. The protein is Glutathione synthetase of Shigella flexneri.